A 1470-amino-acid polypeptide reads, in one-letter code: RNA-directed RNA polymerase VP1 (1470 aa).

The interval 28 to 55 is disordered; the sequence is AKQDQKENETTSNNKDTSSSVPKPSNFR. Over residues 37–50 the composition is skewed to polar residues; sequence TTSNNKDTSSSVPK.

The enzyme catalyses RNA(n) + a ribonucleoside 5'-triphosphate = RNA(n+1) + diphosphate. Its function is as follows. RNA-directed RNA polymerase that is involved in transcription and genome replication. Following infection, it catalyzes the synthesis of fully conservative plus strands. After core assembly, which consists in recruitment of one capped plus-strand for each genomic segments and polymerase complexes, the polymerase switches mode and catalyzes the synthesis of complementary minus-strands. This Saccharum officinarum (Sugarcane) protein is RNA-directed RNA polymerase VP1 (S1).